The primary structure comprises 161 residues: Nucleotide-binding protein RC1_3464 (161 aa).

Belongs to the YajQ family.

Functionally, nucleotide-binding protein. In Rhodospirillum centenum (strain ATCC 51521 / SW), this protein is Nucleotide-binding protein RC1_3464.